The primary structure comprises 508 residues: Photosystem II CP47 reaction center protein (508 aa).

6 helical membrane passes run 21–36, 101–115, 140–156, 203–218, 237–252, and 457–472; these read SVHIMHTALVAGWAGS, IAFSGLCFLAAIWHW, GIHLFLSGVACFGFGAF, IAAGTLGILAGLFHLS, VLSSSIAAVFFAAFVV, and SFALLFFFGHIWHGAR.

The protein belongs to the PsbB/PsbC family. PsbB subfamily. As to quaternary structure, PSII is composed of 1 copy each of membrane proteins PsbA, PsbB, PsbC, PsbD, PsbE, PsbF, PsbH, PsbI, PsbJ, PsbK, PsbL, PsbM, PsbT, PsbX, PsbY, PsbZ, Psb30/Ycf12, at least 3 peripheral proteins of the oxygen-evolving complex and a large number of cofactors. It forms dimeric complexes. The cofactor is Binds multiple chlorophylls. PSII binds additional chlorophylls, carotenoids and specific lipids..

The protein localises to the plastid membrane. Functionally, one of the components of the core complex of photosystem II (PSII). It binds chlorophyll and helps catalyze the primary light-induced photochemical processes of PSII. PSII is a light-driven water:plastoquinone oxidoreductase, using light energy to abstract electrons from H(2)O, generating O(2) and a proton gradient subsequently used for ATP formation. The chain is Photosystem II CP47 reaction center protein from Cuscuta reflexa (Southern Asian dodder).